Here is a 394-residue protein sequence, read N- to C-terminus: DNA replication and repair protein RecF (394 aa).

Residue 30 to 37 participates in ATP binding; the sequence is GPNAAGKT.

The protein belongs to the RecF family.

It is found in the cytoplasm. The RecF protein is involved in DNA metabolism; it is required for DNA replication and normal SOS inducibility. RecF binds preferentially to single-stranded, linear DNA. It also seems to bind ATP. This Roseiflexus castenholzii (strain DSM 13941 / HLO8) protein is DNA replication and repair protein RecF.